We begin with the raw amino-acid sequence, 591 residues long: Serine/threonine-protein kinase Nek2 (591 aa).

Residues 4–258 (YEVLEQIGKG…AAQLLKHPQL (255 aa)) enclose the Protein kinase domain. ATP contacts are provided by residues 10-18 (IGKGAFGSA) and Lys-33. The active-site Proton acceptor is the Asp-129. Disordered regions lie at residues 309–331 (LGNE…SSTR), 382–408 (ARNQ…TTPN), and 500–534 (RTDG…DTSS). 2 stretches are compositionally biased toward polar residues: residues 391–408 (TSYN…TTPN) and 504–534 (DNGS…DTSS).

Belongs to the protein kinase superfamily. NEK Ser/Thr protein kinase family. NIMA subfamily. As to expression, expressed in anthers, pistils and leaves.

It catalyses the reaction L-seryl-[protein] + ATP = O-phospho-L-seryl-[protein] + ADP + H(+). The catalysed reaction is L-threonyl-[protein] + ATP = O-phospho-L-threonyl-[protein] + ADP + H(+). Its function is as follows. May be involved in plant development processes. The protein is Serine/threonine-protein kinase Nek2 of Oryza sativa subsp. japonica (Rice).